The chain runs to 265 residues: Tryptophan 2,3-dioxygenase (265 aa).

Residues 38–42 (FIVVH) and arginine 104 contribute to the substrate site. Histidine 223 is a heme binding site. Threonine 237 contributes to the substrate binding site.

It belongs to the tryptophan 2,3-dioxygenase family. As to quaternary structure, homotetramer. Heme serves as cofactor.

The catalysed reaction is L-tryptophan + O2 = N-formyl-L-kynurenine. The protein operates within amino-acid degradation; L-tryptophan degradation via kynurenine pathway; L-kynurenine from L-tryptophan: step 1/2. In terms of biological role, heme-dependent dioxygenase that catalyzes the oxidative cleavage of the L-tryptophan (L-Trp) pyrrole ring and converts L-tryptophan to N-formyl-L-kynurenine. Catalyzes the oxidative cleavage of the indole moiety. The chain is Tryptophan 2,3-dioxygenase from Anaeromyxobacter sp. (strain K).